The primary structure comprises 345 residues: Thylakoid lumenal 29 kDa protein, chloroplastic (345 aa).

The protein belongs to the peroxidase family.

Its subcellular location is the plastid. The protein resides in the chloroplast thylakoid lumen. This chain is Thylakoid lumenal 29 kDa protein, chloroplastic (CLEB3J9), found in Solanum lycopersicum (Tomato).